The chain runs to 426 residues: MLGPPRRGPAYKTKLCALWQRGNCNRDTCSFAHGHGDIRRPPSSRGAFTHHPGRRDYRAGDFRGRIDRRFSPRRRHSPGRESRGHRPLYDRRPSSRERDSSYSRSPSRKSERRHEKKTDDGETNSSRSLSLSDNNDEKKKDKFSSGDEKEDHEKQLKQIRLDMEALRDDKTQMEVILDEKIDEVRKISSKVNDLEVQLRREKDECHRMTSKMKKFIKAHARFLKAQEEVKRSQARFERLGDLLASDILKRGANEEGSSVNEDLNERSPNTAATKKRSIPYSTSEEAKAVKKRRERDSDTMTRSDKYRSDVTDFDKTSKGTEATKSLYLKKKLWEDEKSKLGANIFTEKVKGSPVRHVLPSTGMAAHAIDDLNEAIELEDRHESIDALLENDADDKTRSPAIPLQPPPVVQNAYEQYEGDDEEVDVE.

The C3H1-type zinc finger occupies 10 to 36 (AYKTKLCALWQRGNCNRDTCSFAHGHG). Disordered stretches follow at residues 34-155 (GHGD…HEKQ), 253-317 (NEEG…DKTS), and 390-426 (NDAD…VDVE). Composition is skewed to basic and acidic residues over residues 54 to 70 (RRDY…DRRF), 78 to 101 (PGRE…RDSS), and 108 to 120 (RKSE…KTDD). Low complexity predominate over residues 124–133 (NSSRSLSLSD). The segment covering 135-155 (NDEKKKDKFSSGDEKEDHEKQ) has biased composition (basic and acidic residues). Positions 144–245 (SSGDEKEDHE…FERLGDLLAS (102 aa)) form a coiled coil. Polar residues predominate over residues 255-272 (EGSSVNEDLNERSPNTAA). A compositionally biased stretch (basic and acidic residues) spans 284 to 317 (EEAKAVKKRRERDSDTMTRSDKYRSDVTDFDKTS). A compositionally biased stretch (acidic residues) spans 416–426 (YEGDDEEVDVE).

This Oryza sativa subsp. japonica (Rice) protein is Zinc finger CCCH domain-containing protein 13.